A 345-amino-acid chain; its full sequence is Methylthioribose-1-phosphate isomerase (345 aa).

Substrate contacts are provided by residues 44–46, arginine 86, and glutamine 194; that span reads RGA. Catalysis depends on aspartate 235, which acts as the Proton donor. 245–246 contacts substrate; that stretch reads NK.

The protein belongs to the eIF-2B alpha/beta/delta subunits family. MtnA subfamily.

The enzyme catalyses 5-(methylsulfanyl)-alpha-D-ribose 1-phosphate = 5-(methylsulfanyl)-D-ribulose 1-phosphate. It functions in the pathway amino-acid biosynthesis; L-methionine biosynthesis via salvage pathway; L-methionine from S-methyl-5-thio-alpha-D-ribose 1-phosphate: step 1/6. In terms of biological role, catalyzes the interconversion of methylthioribose-1-phosphate (MTR-1-P) into methylthioribulose-1-phosphate (MTRu-1-P). In Desulfitobacterium hafniense (strain DSM 10664 / DCB-2), this protein is Methylthioribose-1-phosphate isomerase.